The primary structure comprises 132 residues: Small ribosomal subunit protein uS8 (132 aa).

It belongs to the universal ribosomal protein uS8 family. Part of the 30S ribosomal subunit. Contacts proteins S5 and S12.

In terms of biological role, one of the primary rRNA binding proteins, it binds directly to 16S rRNA central domain where it helps coordinate assembly of the platform of the 30S subunit. In Corynebacterium diphtheriae (strain ATCC 700971 / NCTC 13129 / Biotype gravis), this protein is Small ribosomal subunit protein uS8.